Consider the following 491-residue polypeptide: UDP-N-acetylmuramate--L-alanine ligase (491 aa).

126–132 (GTHGKTT) is an ATP binding site.

It belongs to the MurCDEF family.

The protein localises to the cytoplasm. It catalyses the reaction UDP-N-acetyl-alpha-D-muramate + L-alanine + ATP = UDP-N-acetyl-alpha-D-muramoyl-L-alanine + ADP + phosphate + H(+). Its pathway is cell wall biogenesis; peptidoglycan biosynthesis. Its function is as follows. Cell wall formation. In Klebsiella pneumoniae subsp. pneumoniae (strain ATCC 700721 / MGH 78578), this protein is UDP-N-acetylmuramate--L-alanine ligase.